Here is a 269-residue protein sequence, read N- to C-terminus: MRVSFTKMHGLGNDFIMLDARAESLPPMTAATARALADRKTGIGCDQVILLEPSDSADFRMRIFNADGGEVEACGNASRAVALLHGEAANVETSGGVIAIAPASGGARVDMGVPRFDWEAIPLAYAMDTLSLPVGWGELEAPAAVNVGNPHVVFFVDDADAVPLDTMGPGIETDPLFPERINVNIASLTGDDALKLHVWERGVGLTRACGTGACATAIAAMRRGLTGRKVAVTLPGGTLQIEWDADDHIIMTGPAAESFRGTFDWGDYS.

Residues Asn-13, Gln-47, and Asn-65 each contribute to the substrate site. Cys-74 serves as the catalytic Proton donor. Residues 75-76 (GN), Asn-149, Asn-182, and 200-201 (ER) each bind substrate. Cys-209 serves as the catalytic Proton acceptor. 210–211 (GT) lines the substrate pocket.

This sequence belongs to the diaminopimelate epimerase family. As to quaternary structure, homodimer.

Its subcellular location is the cytoplasm. It catalyses the reaction (2S,6S)-2,6-diaminopimelate = meso-2,6-diaminopimelate. Its pathway is amino-acid biosynthesis; L-lysine biosynthesis via DAP pathway; DL-2,6-diaminopimelate from LL-2,6-diaminopimelate: step 1/1. In terms of biological role, catalyzes the stereoinversion of LL-2,6-diaminopimelate (L,L-DAP) to meso-diaminopimelate (meso-DAP), a precursor of L-lysine and an essential component of the bacterial peptidoglycan. The polypeptide is Diaminopimelate epimerase (Erythrobacter litoralis (strain HTCC2594)).